Here is a 109-residue protein sequence, read N- to C-terminus: Nucleoid-associated protein VIBHAR_03086 (109 aa).

2 disordered regions span residues 1-21 (MFGKGGMGNLMKQAQQMQDRM) and 88-109 (QKEKMASVTGGMQLPPGMKMPF).

Belongs to the YbaB/EbfC family. Homodimer.

It is found in the cytoplasm. The protein localises to the nucleoid. In terms of biological role, binds to DNA and alters its conformation. May be involved in regulation of gene expression, nucleoid organization and DNA protection. This is Nucleoid-associated protein VIBHAR_03086 from Vibrio campbellii (strain ATCC BAA-1116).